The sequence spans 78 residues: Delta-conotoxin-like CVIE (78 aa).

Residues 1-22 (MKLTCMMIVAVLFLTAWTFVTA) form the signal peptide. A propeptide spanning residues 23–49 (DDSRNGLKNLFPKARHEMKNPEASKLN) is cleaved from the precursor. 3 disulfide bridges follow: C54–C69, C61–C73, and C68–C77. The residue at position 65 (P65) is a 4-hydroxyproline.

It belongs to the conotoxin O1 superfamily. In terms of tissue distribution, expressed by the venom duct.

The protein localises to the secreted. In terms of biological role, delta-conotoxins bind to site 6 of voltage-gated sodium channels (Nav) and inhibit the inactivation process. This is Delta-conotoxin-like CVIE from Conus catus (Cat cone).